We begin with the raw amino-acid sequence, 882 residues long: Chondroitin sulfate synthase 3 (882 aa).

At 1–7 (MAVRSRR) the chain is on the cytoplasmic side. A helical; Signal-anchor for type II membrane protein membrane pass occupies residues 8-28 (PWMSVALGLVLGFTAASWLIA). Topologically, residues 29–882 (PRVAELSERK…LGVRYNRTLS (854 aa)) are lumenal. The tract at residues 46–167 (SYYGRSAAGP…GDGGAAAPSA (122 aa)) is disordered. Low complexity-rich tracts occupy residues 59-69 (AQQPLPQPQSR) and 120-131 (GATGLPGAPAAE). N-linked (GlcNAc...) asparagine glycosylation is found at Asn155, Asn279, and Asn710. Asp720 and His834 together coordinate a divalent metal cation. Asn878 is a glycosylation site (N-linked (GlcNAc...) asparagine).

Belongs to the chondroitin N-acetylgalactosaminyltransferase family. It depends on Co(2+) as a cofactor. Mn(2+) is required as a cofactor. Requires Cd(2+) as cofactor. As to expression, detected at low levels in brain, cerebral cortex, uterus and small intestine.

The protein localises to the golgi apparatus. Its subcellular location is the golgi stack membrane. It catalyses the reaction 3-O-(beta-D-GlcA-(1-&gt;3)-beta-D-GalNAc-(1-&gt;4)-beta-D-GlcA-(1-&gt;3)-beta-D-Gal-(1-&gt;3)-beta-D-Gal-(1-&gt;4)-beta-D-Xyl)-L-seryl-[protein] + UDP-N-acetyl-alpha-D-galactosamine = 3-O-(beta-D-GalNAc-(1-&gt;4)-beta-D-GlcA-(1-&gt;3)-beta-D-GalNAc-(1-&gt;4)-beta-D-GlcA-(1-&gt;3)-beta-D-Gal-(1-&gt;3)-beta-D-Gal-(1-&gt;4)-beta-D-Xyl)-L-seryl-[protein] + UDP + H(+). It carries out the reaction 3-O-{beta-D-GlcA-(1-&gt;3)-[beta-D-GalNAc-(1-&gt;4)-beta-D-GlcA-(1-&gt;3)](n)-beta-D-GalNAc-(1-&gt;4)-beta-D-GlcA-(1-&gt;3)-beta-D-Gal-(1-&gt;3)-beta-D-Gal-(1-&gt;4)-beta-D-Xyl}-L-seryl-[protein] + UDP-N-acetyl-alpha-D-galactosamine = 3-O-{[beta-D-GalNAc-(1-&gt;4)-beta-D-GlcA-(1-&gt;3)](n+1)-beta-D-GalNAc-(1-&gt;4)-beta-D-GlcA-(1-&gt;3)-beta-D-Gal-(1-&gt;3)-beta-D-Gal-(1-&gt;4)-beta-D-Xyl}-L-seryl-[protein] + UDP + H(+). The enzyme catalyses 3-O-(beta-D-GalNAc-(1-&gt;4)-beta-D-GlcA-(1-&gt;3)-beta-D-Gal-(1-&gt;3)-beta-D-Gal-(1-&gt;4)-beta-D-Xyl)-L-seryl-[protein] + UDP-alpha-D-glucuronate = 3-O-(beta-D-GlcA-(1-&gt;3)-beta-D-GalNAc-(1-&gt;4)-beta-D-GlcA-(1-&gt;3)-beta-D-Gal-(1-&gt;3)-beta-D-Gal-(1-&gt;4)-beta-D-Xyl)-L-seryl-[protein] + UDP + H(+). The catalysed reaction is 3-O-{[beta-D-GalNAc-(1-&gt;4)-beta-D-GlcA-(1-&gt;3)](n)-beta-D-GalNAc-(1-&gt;4)-beta-D-GlcA-(1-&gt;3)-beta-D-Gal-(1-&gt;3)-beta-D-Gal-(1-&gt;4)-beta-D-Xyl}-L-seryl-[protein] + UDP-alpha-D-glucuronate = 3-O-{beta-D-GlcA-(1-&gt;3)-[beta-D-GalNAc-(1-&gt;4)-beta-D-GlcA-(1-&gt;3)](n)-beta-D-GalNAc-(1-&gt;4)-beta-D-GlcA-(1-&gt;3)-beta-D-Gal-(1-&gt;3)-beta-D-Gal-(1-&gt;4)-beta-D-Xyl}-L-seryl-[protein] + UDP + H(+). In terms of biological role, has both beta-1,3-glucuronic acid and beta-1,4-N-acetylgalactosamine transferase activity. Transfers glucuronic acid (GlcUA) from UDP-GlcUA and N-acetylgalactosamine (GalNAc) from UDP-GalNAc to the non-reducing end of the elongating chondroitin polymer. Specific activity is much reduced compared to CHSY1. The polypeptide is Chondroitin sulfate synthase 3 (CHSY3) (Homo sapiens (Human)).